The sequence spans 396 residues: Pre-mycofactocin synthase (396 aa).

The FMN hydroxy acid dehydrogenase domain maps to 1–383 (MAEAWFETVA…SPADILVPTG (383 aa)). The FMN site is built by serine 108, glutamine 128, threonine 156, and lysine 254. Histidine 278 (proton acceptor) is an active-site residue. Residues 309–313 (DGGIR) and 332–333 (GR) contribute to the FMN site.

The protein belongs to the FMN-dependent alpha-hydroxy acid dehydrogenase family. FMN serves as cofactor.

It catalyses the reaction 3-amino-5-[(4-hydroxyphenyl)methyl]-4,4-dimethyl-2-pyrrolidin-2-one + O2 + H2O = pre-mycofactocin + H2O2 + NH4(+). Functionally, involved in the biosynthesis of the enzyme cofactor mycofactocin (MFT). Catalyzes the oxidative deamination of AHDP (3-amino-5-[(4-hydroxyphenyl)methyl]-4,4-dimethyl-2-pyrrolidin-2-one), forming an alpha-keto amide moiety on the resulting molecule, which is called pre-mycofactocin (PMFT). This reaction occurs via a 5-[(4-hydroxyphenyl)methyl]-3-imino-4,4-dimethylpyrrolidin-2-one intermediate, which converts to PMFT. The alpha-keto amide moiety is the redox-active center for the redox activity of mycofactocin. This chain is Pre-mycofactocin synthase (mftD), found in Mycobacterium tuberculosis (strain CDC 1551 / Oshkosh).